Reading from the N-terminus, the 350-residue chain is MAQQAPDREKALELALAQIDKNFGKGSVMRLGEEVRQPIAVIPTGSIALDVALGIGGLPRGRVVEIYGPESSGKTTVALHAVANAQAAGGIAAFIDAEHALDPDYAQKLGVDTDALLVSQPDTGEQALEIADMLIRSGALDILVIDSVAALVPRAEIEGEMGDSHVGLQARLMSQALRKMTGALNNSGTTAIFINQLREKIGVMFGSPETTTGGKALKFYASVRMDVRRIETLKDGTDAVGNRTRVKVVKNKVSPPFKQAEFDILYGKGISREGSLIDMGVEHGFIRKSGSWFTYDGEQLGQGKENARNFLLQNVDVANEIEKKIKEKLGIGAQLTDDANDDALPAPVDF.

Position 68–75 (68–75 (GPESSGKT)) interacts with ATP.

It belongs to the RecA family.

The protein localises to the cytoplasm. Its function is as follows. Can catalyze the hydrolysis of ATP in the presence of single-stranded DNA, the ATP-dependent uptake of single-stranded DNA by duplex DNA, and the ATP-dependent hybridization of homologous single-stranded DNAs. It interacts with LexA causing its activation and leading to its autocatalytic cleavage. In Mycolicibacterium vanbaalenii (strain DSM 7251 / JCM 13017 / BCRC 16820 / KCTC 9966 / NRRL B-24157 / PYR-1) (Mycobacterium vanbaalenii), this protein is Protein RecA.